A 246-amino-acid polypeptide reads, in one-letter code: Small ribosomal subunit protein uS2 (246 aa).

This sequence belongs to the universal ribosomal protein uS2 family.

The protein is Small ribosomal subunit protein uS2 of Pseudomonas aeruginosa (strain LESB58).